The primary structure comprises 130 residues: Holo-[acyl-carrier-protein] synthase (130 aa).

Mg(2+)-binding residues include D8 and E62.

It belongs to the P-Pant transferase superfamily. AcpS family. Mg(2+) serves as cofactor.

The protein resides in the cytoplasm. The enzyme catalyses apo-[ACP] + CoA = holo-[ACP] + adenosine 3',5'-bisphosphate + H(+). Transfers the 4'-phosphopantetheine moiety from coenzyme A to a Ser of acyl-carrier-protein. The polypeptide is Holo-[acyl-carrier-protein] synthase (Polynucleobacter asymbioticus (strain DSM 18221 / CIP 109841 / QLW-P1DMWA-1) (Polynucleobacter necessarius subsp. asymbioticus)).